Here is a 124-residue protein sequence, read N- to C-terminus: uncharacterized protein (124 aa).

Positions aspartate 42–isoleucine 118 constitute a GIY-YIG domain.

This is an uncharacterized protein from Bacillus subtilis (strain 168).